A 438-amino-acid chain; its full sequence is Enolase (438 aa).

The substrate site is built by His-159 and Glu-168. Glu-211 (proton donor) is an active-site residue. The Mg(2+) site is built by Asp-246, Glu-297, and Asp-322. Substrate-binding residues include Glu-297 and Asp-322. Catalysis depends on Lys-347, which acts as the Proton acceptor. Substrate contacts are provided by residues 374 to 377 and Lys-398; that span reads SHRS.

It belongs to the enolase family. As to quaternary structure, homodimer. Requires Mg(2+) as cofactor.

It localises to the cytoplasm. The catalysed reaction is (2R)-2-phosphoglycerate = phosphoenolpyruvate + H2O. It participates in carbohydrate degradation; glycolysis; pyruvate from D-glyceraldehyde 3-phosphate: step 4/5. Its function is as follows. Involved in osmoadaptation. This chain is Enolase (enoA), found in Emericella nidulans (strain FGSC A4 / ATCC 38163 / CBS 112.46 / NRRL 194 / M139) (Aspergillus nidulans).